The sequence spans 371 residues: tRNA (guanine(26)-N(2))-dimethyltransferase (371 aa).

Residues 1-370 form the Trm1 methyltransferase domain; that stretch reads MDVSEGGVTV…GGLAEVEAAV (370 aa). Residues R36, R66, D81, D107, and A108 each coordinate S-adenosyl-L-methionine. The Zn(2+) site is built by C238, C241, C258, and C261.

It belongs to the class I-like SAM-binding methyltransferase superfamily. Trm1 family.

It catalyses the reaction guanosine(26) in tRNA + 2 S-adenosyl-L-methionine = N(2)-dimethylguanosine(26) in tRNA + 2 S-adenosyl-L-homocysteine + 2 H(+). Functionally, dimethylates a single guanine residue at position 26 of a number of tRNAs using S-adenosyl-L-methionine as donor of the methyl groups. This is tRNA (guanine(26)-N(2))-dimethyltransferase from Halobacterium salinarum (strain ATCC 700922 / JCM 11081 / NRC-1) (Halobacterium halobium).